The primary structure comprises 298 residues: GTPase Era (298 aa).

The Era-type G domain occupies 8–176 (RSGSVAVIGR…VSDLLKLVPE (169 aa)). The G1 stretch occupies residues 16 to 23 (GRPNVGKS). 16–23 (GRPNVGKS) contacts GTP. Residues 42–46 (QTTRH) are G2. The G3 stretch occupies residues 63 to 66 (DTPG). Residues 63–67 (DTPGL) and 125–128 (NKVD) each bind GTP. The segment at 125–128 (NKVD) is G4. The G5 stretch occupies residues 155-157 (VSA). Residues 199–283 (VREQLMRQLG…FLETWVRVRE (85 aa)) form the KH type-2 domain.

The protein belongs to the TRAFAC class TrmE-Era-EngA-EngB-Septin-like GTPase superfamily. Era GTPase family. As to quaternary structure, monomer.

Its subcellular location is the cytoplasm. It is found in the cell inner membrane. Functionally, an essential GTPase that binds both GDP and GTP, with rapid nucleotide exchange. Plays a role in 16S rRNA processing and 30S ribosomal subunit biogenesis and possibly also in cell cycle regulation and energy metabolism. The sequence is that of GTPase Era from Xanthomonas campestris pv. campestris (strain 8004).